Consider the following 652-residue polypeptide: MKTRISELVSVLNQYAKEYYQLDQPSVSDAEYDTLYRELVELETAHPELILPDSPTHRVGGKMLDGFEKYSHVYPLFSLQDAFSREELEAFDQRVRKEFPQATYICELKIDGLSISLTYEAGNLVVGATRGDGSVGENITENLKRVADVPLTLPEAVDITVRGECYMPKASFDRVNKQRQEAGEAEFVNPRNAAAGTLRQLDTGVVAQRGLATFLYQEASPSEATSQSQVLEKLDALGFVTNHEYCLAESIDDTWDFIEKIAERRDDLPYEIDGVVIKVNDLAIQEELGFTVKAPRWAVAYKFPAEEKEAEILSVDWTVGRTGVVTPTANLSPVQLAGTTVSRATLHNVDYIAEKDIRIGDTVIVYKAGDIIPAVLKVVDKYRKEQEIMPIPSHCPSCQSDLQHYEDEVALRCINPICPSQLMSKLEHFASRDAMNIAGLGSSIVEKLFGAGLVHDVADIYKLTVDDLLTLEGFKEKSANKLYQAIQTSKSNSAECLLFGLGIRHVGSKASKILVEKFGDLETLAFADQEAIASLEGLGQVIAKSLTTFFASEGAQQLLAELKEAKVNLTYLGQVVDENAALSGMTVVLTGKLERMKRNEAKAKLEALGANVAGSVSKKTNLVVAGTDAGSTLTKAQELGIEIKDEAWLESL.

NAD(+)-binding positions include Asp29 to Asp33, Ser78 to Leu79, and Glu107. Catalysis depends on Lys109, which acts as the N6-AMP-lysine intermediate. NAD(+) contacts are provided by Arg130, Glu164, Lys278, and Lys302. Residues Cys395, Cys398, Cys413, and Cys418 each contribute to the Zn(2+) site. In terms of domain architecture, BRCT spans Asp577–Leu652.

The protein belongs to the NAD-dependent DNA ligase family. LigA subfamily. Mg(2+) serves as cofactor. Requires Mn(2+) as cofactor.

It catalyses the reaction NAD(+) + (deoxyribonucleotide)n-3'-hydroxyl + 5'-phospho-(deoxyribonucleotide)m = (deoxyribonucleotide)n+m + AMP + beta-nicotinamide D-nucleotide.. In terms of biological role, DNA ligase that catalyzes the formation of phosphodiester linkages between 5'-phosphoryl and 3'-hydroxyl groups in double-stranded DNA using NAD as a coenzyme and as the energy source for the reaction. It is essential for DNA replication and repair of damaged DNA. This chain is DNA ligase, found in Streptococcus suis (strain 05ZYH33).